A 122-amino-acid polypeptide reads, in one-letter code: Small ribosomal subunit protein uS12c (122 aa).

It belongs to the universal ribosomal protein uS12 family. As to quaternary structure, part of the 30S ribosomal subunit.

It is found in the plastid. The protein resides in the chloroplast. In terms of biological role, with S4 and S5 plays an important role in translational accuracy. Located at the interface of the 30S and 50S subunits. The chain is Small ribosomal subunit protein uS12c (rps12) from Cyanidioschyzon merolae (strain NIES-3377 / 10D) (Unicellular red alga).